The chain runs to 727 residues: Protein edg-1 (727 aa).

The segment at 703-727 is disordered; it reads FAESSVKPTTSSAYGNSSNFSRYAD.

As to quaternary structure, may interact with deps-1 and prg-1.

The protein localises to the cytoplasmic granule. In terms of biological role, plays a role in regulating deps-1 cluster formation in the germline. This Caenorhabditis elegans protein is Protein edg-1.